We begin with the raw amino-acid sequence, 471 residues long: Lincomycin resistance protein LmrB (471 aa).

Transmembrane regions (helical) follow at residues 13 to 35, 55 to 77, 84 to 106, 111 to 133, 140 to 162, 167 to 189, 201 to 223, 227 to 249, 269 to 291, 329 to 351, 358 to 380, and 445 to 467; these read PIPIIASFLMAGFIGLFSETALN, LTTGYLLTLGILVPISGLLLQWF, FTAVSFSIAGTLIAALSPTFAML, VVQAVGTALLLPLMFNTILLIFP, AMGMIGLVIMFAPAVGPTISGLI, TWNWIFWISLPFLIIALLFGMKF, IDILSIILSTLGFGGVVFAFSSA, GWGSATVLVSIIVGGIALGLFVW, FTLGLILVFISFMMILSTMILLP, AYGPRALVIPGFIVAVVALFFLT, SALTIIVLHSVLMIGISMVMMPA, and GIQNAFVFGLIMACIGLLCSLFI.

This sequence belongs to the major facilitator superfamily. EmrB family.

Its subcellular location is the cell membrane. Proton-dependent transporter. May mediate the efflux of lincomycin. This Listeria monocytogenes serovar 1/2a (strain ATCC BAA-679 / EGD-e) protein is Lincomycin resistance protein LmrB (lmrB).